A 144-amino-acid chain; its full sequence is Grifin (144 aa).

Residues 5–133 (SKAFCAGGLA…DHCLAQVELA (129 aa)) form the Galectin domain. Serine 138 carries the post-translational modification Phosphoserine.

As to quaternary structure, homodimer. As to expression, not detected in lens.

The protein is Grifin (GRIFIN) of Homo sapiens (Human).